Consider the following 39-residue polypeptide: Photosystem II reaction center protein L (39 aa).

The chain crosses the membrane as a helical span at residues 18–38; sequence SLYLGLLSVLVLGILFSSYFF.

Belongs to the PsbL family. In terms of assembly, PSII is composed of 1 copy each of membrane proteins PsbA, PsbB, PsbC, PsbD, PsbE, PsbF, PsbH, PsbI, PsbJ, PsbK, PsbL, PsbM, PsbT, PsbX, PsbY, Psb30/Ycf12, peripheral proteins PsbO, CyanoQ (PsbQ), PsbU, PsbV and a large number of cofactors. It forms dimeric complexes.

The protein resides in the cellular thylakoid membrane. Its function is as follows. One of the components of the core complex of photosystem II (PSII). PSII is a light-driven water:plastoquinone oxidoreductase that uses light energy to abstract electrons from H(2)O, generating O(2) and a proton gradient subsequently used for ATP formation. It consists of a core antenna complex that captures photons, and an electron transfer chain that converts photonic excitation into a charge separation. This subunit is found at the monomer-monomer interface and is required for correct PSII assembly and/or dimerization. The chain is Photosystem II reaction center protein L from Prochlorococcus marinus subsp. pastoris (strain CCMP1986 / NIES-2087 / MED4).